Reading from the N-terminus, the 263-residue chain is Tryptophan synthase alpha chain (263 aa).

Active-site proton acceptor residues include Glu-49 and Asp-60.

The protein belongs to the TrpA family. Tetramer of two alpha and two beta chains.

The enzyme catalyses (1S,2R)-1-C-(indol-3-yl)glycerol 3-phosphate + L-serine = D-glyceraldehyde 3-phosphate + L-tryptophan + H2O. It participates in amino-acid biosynthesis; L-tryptophan biosynthesis; L-tryptophan from chorismate: step 5/5. In terms of biological role, the alpha subunit is responsible for the aldol cleavage of indoleglycerol phosphate to indole and glyceraldehyde 3-phosphate. This is Tryptophan synthase alpha chain from Cereibacter sphaeroides (strain ATCC 17025 / ATH 2.4.3) (Rhodobacter sphaeroides).